Reading from the N-terminus, the 310-residue chain is tRNA-cytidine(32) 2-sulfurtransferase (310 aa).

The PP-loop motif signature appears at 45–50 (SGGKDS). Positions 120, 123, and 211 each coordinate [4Fe-4S] cluster.

This sequence belongs to the TtcA family. As to quaternary structure, homodimer. Requires Mg(2+) as cofactor. [4Fe-4S] cluster serves as cofactor.

Its subcellular location is the cytoplasm. It carries out the reaction cytidine(32) in tRNA + S-sulfanyl-L-cysteinyl-[cysteine desulfurase] + AH2 + ATP = 2-thiocytidine(32) in tRNA + L-cysteinyl-[cysteine desulfurase] + A + AMP + diphosphate + H(+). It participates in tRNA modification. Catalyzes the ATP-dependent 2-thiolation of cytidine in position 32 of tRNA, to form 2-thiocytidine (s(2)C32). The sulfur atoms are provided by the cysteine/cysteine desulfurase (IscS) system. The polypeptide is tRNA-cytidine(32) 2-sulfurtransferase (Shewanella sp. (strain ANA-3)).